Reading from the N-terminus, the 406-residue chain is 4-hydroxy-3-methylbut-2-en-1-yl diphosphate synthase (ferredoxin) (406 aa).

Cys315, Cys318, Cys349, and Glu356 together coordinate [4Fe-4S] cluster.

Belongs to the IspG family. Requires [4Fe-4S] cluster as cofactor.

It catalyses the reaction (2E)-4-hydroxy-3-methylbut-2-enyl diphosphate + 2 oxidized [2Fe-2S]-[ferredoxin] + H2O = 2-C-methyl-D-erythritol 2,4-cyclic diphosphate + 2 reduced [2Fe-2S]-[ferredoxin] + H(+). It participates in isoprenoid biosynthesis; isopentenyl diphosphate biosynthesis via DXP pathway; isopentenyl diphosphate from 1-deoxy-D-xylulose 5-phosphate: step 5/6. In terms of biological role, converts 2C-methyl-D-erythritol 2,4-cyclodiphosphate (ME-2,4cPP) into 1-hydroxy-2-methyl-2-(E)-butenyl 4-diphosphate. This chain is 4-hydroxy-3-methylbut-2-en-1-yl diphosphate synthase (ferredoxin), found in Microcystis aeruginosa (strain NIES-843 / IAM M-2473).